A 104-amino-acid chain; its full sequence is A-type ATP synthase subunit F (104 aa).

It belongs to the V-ATPase F subunit family. As to quaternary structure, has multiple subunits with at least A(3), B(3), C, D, E, F, H, I and proteolipid K(x).

It is found in the cell membrane. Functionally, component of the A-type ATP synthase that produces ATP from ADP in the presence of a proton gradient across the membrane. This chain is A-type ATP synthase subunit F, found in Thermoplasma acidophilum (strain ATCC 25905 / DSM 1728 / JCM 9062 / NBRC 15155 / AMRC-C165).